The sequence spans 445 residues: Hydroxymethylglutaryl-CoA synthase (445 aa).

Aspartate 31 is a (3S)-3-hydroxy-3-methylglutaryl-CoA binding site. Glutamate 83 functions as the Proton donor/acceptor in the catalytic mechanism. Residues cysteine 120, threonine 163, serine 211, histidine 244, lysine 253, asparagine 328, and serine 364 each coordinate (3S)-3-hydroxy-3-methylglutaryl-CoA. Residue cysteine 120 is the Acyl-thioester intermediate of the active site. The Proton donor/acceptor role is filled by histidine 244.

This sequence belongs to the thiolase-like superfamily. HMG-CoA synthase family.

The catalysed reaction is acetoacetyl-CoA + acetyl-CoA + H2O = (3S)-3-hydroxy-3-methylglutaryl-CoA + CoA + H(+). It functions in the pathway metabolic intermediate biosynthesis; (R)-mevalonate biosynthesis; (R)-mevalonate from acetyl-CoA: step 2/3. Its activity is regulated as follows. In contrast to bacterial and eukaryotic HMG-CoA synthases, is insensitive to feedback substrate inhibition by acetoacetyl-CoA. Enzymatic activity is inhibited by hymeglusin, which also blocks the propagation of H.volcanii cells in vivo, indicating the critical role that the mevalonate pathway plays in isoprenoid biosynthesis by these archaea. In terms of biological role, catalyzes the condensation of acetyl-CoA with acetoacetyl-CoA to form 3-hydroxy-3-methylglutaryl-CoA (HMG-CoA). Functions in the mevalonate (MVA) pathway leading to isopentenyl diphosphate (IPP), a key precursor for the biosynthesis of isoprenoid compounds such as archaeal membrane lipids. In Haloferax volcanii (strain ATCC 29605 / DSM 3757 / JCM 8879 / NBRC 14742 / NCIMB 2012 / VKM B-1768 / DS2) (Halobacterium volcanii), this protein is Hydroxymethylglutaryl-CoA synthase (hmgB).